The chain runs to 81 residues: Ferredoxin (81 aa).

Residues 2 to 30 (KYTIVDKETCIACGACGAAAPDIYDYDED) enclose the 4Fe-4S ferredoxin-type domain. Cys-11, Cys-14, Cys-17, and Cys-61 together coordinate [4Fe-4S] cluster.

The cofactor is [4Fe-4S] cluster.

In terms of biological role, ferredoxins are iron-sulfur proteins that transfer electrons in a wide variety of metabolic reactions. This is Ferredoxin (fer) from Geobacillus stearothermophilus (Bacillus stearothermophilus).